A 237-amino-acid chain; its full sequence is NAD(P)H-hydrate epimerase (237 aa).

The YjeF N-terminal domain occupies 11 to 223; the sequence is AASLDRDLMN…GLDIPEYPGV (213 aa). 61-65 contributes to the (6S)-NADPHX binding site; the sequence is NNGGD. N62 and D123 together coordinate K(+). (6S)-NADPHX-binding positions include 127-133 and D156; that span reads GFSFSGP. S159 is a K(+) binding site.

It belongs to the NnrE/AIBP family. The cofactor is K(+).

Its subcellular location is the cytoplasm. It localises to the mitochondrion. The catalysed reaction is (6R)-NADHX = (6S)-NADHX. The enzyme catalyses (6R)-NADPHX = (6S)-NADPHX. Its function is as follows. Catalyzes the epimerization of the S- and R-forms of NAD(P)HX, a damaged form of NAD(P)H that is a result of enzymatic or heat-dependent hydration. This is a prerequisite for the S-specific NAD(P)H-hydrate dehydratase to allow the repair of both epimers of NAD(P)HX. This is NAD(P)H-hydrate epimerase from Ajellomyces capsulatus (strain G186AR / H82 / ATCC MYA-2454 / RMSCC 2432) (Darling's disease fungus).